The primary structure comprises 85 residues: Large ribosomal subunit protein uL23 (85 aa).

Belongs to the universal ribosomal protein uL23 family. Part of the 50S ribosomal subunit. Interacts with protein L29 and weakly with protein L39e.

Binds to a specific region on the 23S rRNA. Located at the polypeptide exit tunnel on the outside of the subunit. The protein is Large ribosomal subunit protein uL23 of Haloarcula marismortui (strain ATCC 43049 / DSM 3752 / JCM 8966 / VKM B-1809) (Halobacterium marismortui).